The chain runs to 80 residues: Defensin-like protein 44 (80 aa).

Positions 1 to 27 are cleaved as a signal peptide; that stretch reads MAITKTSVTLLLLIIMAASLSNFSVLA. 4 disulfides stabilise this stretch: Cys40-Cys79, Cys44-Cys67, Cys53-Cys77, and Cys57-Cys78.

This sequence belongs to the DEFL family.

The protein localises to the secreted. The chain is Defensin-like protein 44 from Arabidopsis thaliana (Mouse-ear cress).